The sequence spans 266 residues: Small ribosomal subunit protein uS2 (266 aa).

Positions 229–254 (RTSDKEADTTTEEVAQEEVTDTKADE) are disordered. The span at 237-247 (TTTEEVAQEEV) shows a compositional bias: acidic residues.

This sequence belongs to the universal ribosomal protein uS2 family.

The polypeptide is Small ribosomal subunit protein uS2 (Flavobacterium psychrophilum (strain ATCC 49511 / DSM 21280 / CIP 103535 / JIP02/86)).